Here is a 203-residue protein sequence, read N- to C-terminus: Molybdenum cofactor guanylyltransferase (203 aa).

GTP contacts are provided by residues 20-22 (LAG), Lys33, Asn61, Asp78, and Asp108. Asp108 is a binding site for Mg(2+).

It belongs to the MobA family. Monomer. Mg(2+) is required as a cofactor.

The protein localises to the cytoplasm. The enzyme catalyses Mo-molybdopterin + GTP + H(+) = Mo-molybdopterin guanine dinucleotide + diphosphate. Transfers a GMP moiety from GTP to Mo-molybdopterin (Mo-MPT) cofactor (Moco or molybdenum cofactor) to form Mo-molybdopterin guanine dinucleotide (Mo-MGD) cofactor. The chain is Molybdenum cofactor guanylyltransferase from Vibrio cholerae serotype O1 (strain ATCC 39315 / El Tor Inaba N16961).